The primary structure comprises 185 residues: Putative manganese efflux pump MntP (185 aa).

Transmembrane regions (helical) follow at residues 4–24 (LLLS…SVSL), 43–63 (IFFG…GVPI), 67–87 (IDPF…GKMI), 107–127 (LLLA…FALI), 131–151 (VLLP…FGVL), and 165–185 (QILG…EYCL).

Belongs to the MntP (TC 9.B.29) family.

The protein resides in the cell membrane. Its function is as follows. Probably functions as a manganese efflux pump. The sequence is that of Putative manganese efflux pump MntP from Methanocorpusculum labreanum (strain ATCC 43576 / DSM 4855 / Z).